The sequence spans 249 residues: FMN reductase [NAD(P)H] (249 aa).

FMN-binding positions include 11–15 (HRSIR), Q67, 134–136 (PIG), and 173–175 (KPR).

This sequence belongs to the flavin oxidoreductase frp family. As to quaternary structure, homodimer.

The enzyme catalyses FMNH2 + NADP(+) = FMN + NADPH + 2 H(+). It catalyses the reaction FMNH2 + NAD(+) = FMN + NADH + 2 H(+). With respect to regulation, FMN is a competitive inhibitor of NADH, and therefore leads to the preferential utilization of NADPH. In terms of biological role, reduces FMNH(2) to FMN, with NADH or NADPH as reductant. It also reduces nitroaromatic compounds, quinones, chromates and azo dyes. It could supply the reduced form of FMN to luciferase-like protein and contribute to the degradation of aromatic compounds. This is FMN reductase [NAD(P)H] (nfrA2) from Bacillus subtilis (strain 168).